Here is a 208-residue protein sequence, read N- to C-terminus: 3-demethoxyubiquinol 3-hydroxylase (208 aa).

The Fe cation site is built by E57, E87, H90, E139, E171, and H174.

The protein belongs to the COQ7 family. Fe cation is required as a cofactor.

It is found in the cell membrane. It carries out the reaction a 5-methoxy-2-methyl-3-(all-trans-polyprenyl)benzene-1,4-diol + AH2 + O2 = a 3-demethylubiquinol + A + H2O. It functions in the pathway cofactor biosynthesis; ubiquinone biosynthesis. In terms of biological role, catalyzes the hydroxylation of 2-nonaprenyl-3-methyl-6-methoxy-1,4-benzoquinol during ubiquinone biosynthesis. The polypeptide is 3-demethoxyubiquinol 3-hydroxylase (Verminephrobacter eiseniae (strain EF01-2)).